The primary structure comprises 341 residues: DNA-directed RNA polymerase subunit alpha (341 aa).

Residues 1 to 223 are alpha N-terminal domain (alpha-NTD); sequence MEQKRPQLKA…DELSVFGNVE (223 aa). The segment at 268–341 is alpha C-terminal domain (alpha-CTD); the sequence is PQPFPTDQDT…LAQFGLALRD (74 aa).

It belongs to the RNA polymerase alpha chain family. In terms of assembly, homodimer. The RNAP catalytic core consists of 2 alpha, 1 beta, 1 beta' and 1 omega subunit. When a sigma factor is associated with the core the holoenzyme is formed, which can initiate transcription.

It catalyses the reaction RNA(n) + a ribonucleoside 5'-triphosphate = RNA(n+1) + diphosphate. In terms of biological role, DNA-dependent RNA polymerase catalyzes the transcription of DNA into RNA using the four ribonucleoside triphosphates as substrates. This chain is DNA-directed RNA polymerase subunit alpha, found in Deinococcus radiodurans (strain ATCC 13939 / DSM 20539 / JCM 16871 / CCUG 27074 / LMG 4051 / NBRC 15346 / NCIMB 9279 / VKM B-1422 / R1).